A 266-amino-acid chain; its full sequence is 4-hydroxy-tetrahydrodipicolinate reductase (266 aa).

G10–M15 is a binding site for NAD(+). Position 38 (K38) interacts with NADP(+). NAD(+)-binding positions include G99–T101 and A125–F128. The Proton donor/acceptor role is filled by H155. H156 is a (S)-2,3,4,5-tetrahydrodipicolinate binding site. Residue K159 is the Proton donor of the active site. A (S)-2,3,4,5-tetrahydrodipicolinate-binding site is contributed by G165–T166.

It belongs to the DapB family.

The protein localises to the cytoplasm. It catalyses the reaction (S)-2,3,4,5-tetrahydrodipicolinate + NAD(+) + H2O = (2S,4S)-4-hydroxy-2,3,4,5-tetrahydrodipicolinate + NADH + H(+). The enzyme catalyses (S)-2,3,4,5-tetrahydrodipicolinate + NADP(+) + H2O = (2S,4S)-4-hydroxy-2,3,4,5-tetrahydrodipicolinate + NADPH + H(+). It participates in amino-acid biosynthesis; L-lysine biosynthesis via DAP pathway; (S)-tetrahydrodipicolinate from L-aspartate: step 4/4. Functionally, catalyzes the conversion of 4-hydroxy-tetrahydrodipicolinate (HTPA) to tetrahydrodipicolinate. This is 4-hydroxy-tetrahydrodipicolinate reductase from Bacillus cereus (strain ZK / E33L).